The sequence spans 88 residues: RQC P-site tRNA stabilizing factor (88 aa).

The S4 RNA-binding domain occupies 1–67 (MRLDKFLKVS…VEITNVKETV (67 aa)).

It belongs to the RqcP family. As to quaternary structure, associates with stalled 50S ribosomal subunits. Binds to RqcH, 23S rRNA and the P-site tRNA. Does not require RqcH for association with 50S subunits.

Its function is as follows. Key component of the ribosome quality control system (RQC), a ribosome-associated complex that mediates the extraction of incompletely synthesized nascent chains from stalled ribosomes and their subsequent degradation. RqcH recruits Ala-charged tRNA, and with RqcP directs the elongation of stalled nascent chains on 50S ribosomal subunits, leading to non-templated C-terminal alanine extensions (Ala tail). The Ala tail promotes nascent chain degradation. RqcP is associated with the translocation-like movement of the peptidyl-tRNA from the A-site into the P-site. The protein is RQC P-site tRNA stabilizing factor of Halalkalibacterium halodurans (strain ATCC BAA-125 / DSM 18197 / FERM 7344 / JCM 9153 / C-125) (Bacillus halodurans).